The following is a 250-amino-acid chain: Capsid protein (250 aa).

The tract at residues 1–31 (MPKRDAPWLMAGTSKVSRSGNYSPSGGMGSK) is disordered. A Bipartite nuclear localization signal motif is present at residues 3-19 (KRDAPWLMAGTSKVSRS). A compositionally biased stretch (polar residues) spans 14–31 (SKVSRSGNYSPSGGMGSK). The Nuclear localization signal motif lies at 34–48 (KANAWVNRPMYRKPR). A zinc finger spans residues 53–70 (YKSPDVPKGCEGPCKVQS). The Nuclear export signal signature appears at 95–116 (ITHRVGKRFCVKSVYILGKIWM). Positions 194–241 (RRFWKVNNHVVYNHQEAGKYENHTENALLLYMACTHASNPVYATLKIR) match the Bipartite nuclear localization signal motif.

The protein belongs to the geminiviridae capsid protein family. In terms of assembly, homomultimer. Binds to single-stranded and double-stranded viral DNA. Interacts (via nuclear localization signals) with host importin alpha-1a.

The protein resides in the virion. Its subcellular location is the host nucleus. In terms of biological role, encapsidates the viral DNA into characteristic twinned ('geminate') particles. Binds the genomic viral ssDNA and shuttles it into and out of the cell nucleus. The CP of bipartite geminiviruses is not required for cell-to-cell or systemic movement. This is Capsid protein from Bean golden yellow mosaic virus (isolate Puerto Rico) (BGYMV).